A 689-amino-acid polypeptide reads, in one-letter code: Glycine--tRNA ligase beta subunit (689 aa).

This sequence belongs to the class-II aminoacyl-tRNA synthetase family. As to quaternary structure, tetramer of two alpha and two beta subunits.

Its subcellular location is the cytoplasm. The enzyme catalyses tRNA(Gly) + glycine + ATP = glycyl-tRNA(Gly) + AMP + diphosphate. The polypeptide is Glycine--tRNA ligase beta subunit (Escherichia coli O17:K52:H18 (strain UMN026 / ExPEC)).